Here is a 1029-residue protein sequence, read N- to C-terminus: Exportin-T (1029 aa).

It belongs to the exportin family.

The protein resides in the nucleus. The protein localises to the cytoplasm. Functionally, tRNA nucleus export receptor which facilitates tRNA translocation across the nuclear pore complex. Involved in pre-tRNA splicing, probably by affecting the interaction of pre-tRNA with splicing endonuclease. In Aspergillus clavatus (strain ATCC 1007 / CBS 513.65 / DSM 816 / NCTC 3887 / NRRL 1 / QM 1276 / 107), this protein is Exportin-T (los1).